Here is an 823-residue protein sequence, read N- to C-terminus: Zygotic DNA replication licensing factor mcm6 (823 aa).

The segment at 159-186 (CLDCQTLVRDVEQQFKYTQPSICRNPVC) adopts a C4-type zinc-finger fold. One can recognise an MCM domain in the interval 347 to 554 (LYHNLCTSLF…TDYAIARRIV (208 aa)). 397-404 (GDPSTAKS) is a binding site for ATP. Positions 529 to 532 (SRFD) match the Arginine finger motif. The interval 666 to 713 (NLDQEDEHEAEEEPQEVINGDASVPSGVNGHVNGMNGHAEEPNAATPK) is disordered. Over residues 667–680 (LDQEDEHEAEEEPQ) the composition is skewed to acidic residues. A compositionally biased stretch (low complexity) spans 692-702 (GVNGHVNGMNG).

It belongs to the MCM family. Component of the mcm2-7 complex (RLF-M). The complex forms a toroidal hexameric ring with the proposed subunit order mcm2-mcm6-mcm4-mcm7-mcm3-mcm5. Begins to associate with zmcm3, mcm4 and mcm7 into mcm complexes at the neurula stage.

It is found in the nucleus. The catalysed reaction is ATP + H2O = ADP + phosphate + H(+). Functionally, acts as a component of the mcm2-7 complex (mcm complex) which is the putative replicative helicase essential for 'once per cell cycle' DNA replication initiation and elongation in eukaryotic cells. The active ATPase sites in the mcm2-7 ring are formed through the interaction surfaces of two neighboring subunits such that a critical structure of a conserved arginine finger motif is provided in trans relative to the ATP-binding site of the Walker A box of the adjacent subunit. The six ATPase active sites, however, are likely to contribute differentially to the complex helicase activity. The existence of maternal and zygotic forms of mcm3 and mcm6 suggests that specific forms of mcm2-7 complexes may be used during different stages of development. May replace mmcm6 in the mcm2-7 complex. This chain is Zygotic DNA replication licensing factor mcm6, found in Xenopus tropicalis (Western clawed frog).